Reading from the N-terminus, the 272-residue chain is Inositol monophosphatase (272 aa).

Residues glutamate 71, aspartate 90, isoleucine 92, and aspartate 93 each contribute to the Mg(2+) site. A substrate-binding site is contributed by glutamate 71. Substrate-binding positions include 92 to 95, 194 to 196, glutamate 213, and aspartate 220; these read IDGT and GTA. Aspartate 220 lines the Mg(2+) pocket.

Belongs to the inositol monophosphatase superfamily. It depends on Mg(2+) as a cofactor.

It localises to the cytoplasm. It catalyses the reaction a myo-inositol phosphate + H2O = myo-inositol + phosphate. It carries out the reaction alpha-D-galactose 1-phosphate + H2O = D-galactose + phosphate. It functions in the pathway polyol metabolism; myo-inositol biosynthesis; myo-inositol from D-glucose 6-phosphate: step 2/2. Its activity is regulated as follows. Inhibited by Li(+), Ca(2+) and Mn(2+), but also by Mg(2+) at concentrations above 3 mM. Its function is as follows. Responsible for the provision of inositol required for synthesis of phosphatidylinositol and polyphosphoinositides. Has broad substrate specificity and can use myo-inositol monophosphates, myo-inositol 1,3-diphosphate, myo-inositol 1,4-diphosphate, scyllo-inositol-phosphate, D-galactose 1-phosphate, glucose-1-phosphate, glucose-6-phosphate, fructose-1-phosphate, beta-glycerophosphate, and 2'-AMP as substrates. The protein is Inositol monophosphatase (impa1) of Dictyostelium discoideum (Social amoeba).